We begin with the raw amino-acid sequence, 686 residues long: Probable serine/threonine-protein kinase pdkA (686 aa).

The interval 1–31 is disordered; sequence MENIVITNTSGGGGGGVPSSSTDPPNNTTTT. Residues 18–31 are compositionally biased toward low complexity; the sequence is PSSSTDPPNNTTTT. The region spanning 69–449 is the Protein kinase domain; the sequence is FIIGKVLGEG…FDNLKAHPFF (381 aa). ATP-binding positions include 79–81 and Lys98; that span reads SYG. The PIF-pocket stretch occupies residues 100 to 144; sequence LEKKQIIKENKIKYVQIEKEIFCKSNHPNIVKLFFTFRSEQCLYY. ATP contacts are provided by residues 147 to 149 and Asp153; that span reads ELC. Asp192 acts as the Proton acceptor in catalysis. 2 residues coordinate ATP: Glu196 and Asp210. 2 disordered regions span residues 211 to 321 and 481 to 584; these read FGTG…NTNT and LFSP…NNIS. Residues 222–257 show a composition bias toward low complexity; the sequence is SSQQQQQQQQQQQQLPTNSSGNLSSLLNNVNNLSVS. A compositionally biased stretch (polar residues) spans 258–267; the sequence is TDLTQQQQNR. 3 stretches are compositionally biased toward low complexity: residues 268-279, 288-321, and 503-568; these read TSSVDSASTTDS, TTTTTNNNNNNNNNNNNNNNNTAAGSNTNTNTNT, and NSCN…QRSG. The region spanning 593–682 is the PH domain; it reads VIYQGLVWKR…DSIKSVILSS (90 aa).

Belongs to the protein kinase superfamily. AGC Ser/Thr protein kinase family. PDPK1 subfamily.

It catalyses the reaction L-seryl-[protein] + ATP = O-phospho-L-seryl-[protein] + ADP + H(+). The enzyme catalyses L-threonyl-[protein] + ATP = O-phospho-L-threonyl-[protein] + ADP + H(+). The protein is Probable serine/threonine-protein kinase pdkA (pdkA) of Dictyostelium discoideum (Social amoeba).